A 337-amino-acid chain; its full sequence is tRNA N6-adenosine threonylcarbamoyltransferase (337 aa).

Residues histidine 111 and histidine 115 each coordinate Fe cation. Substrate-binding positions include 134–138, aspartate 167, glycine 180, and asparagine 272; that span reads LVSGG. Aspartate 300 is a Fe cation binding site.

This sequence belongs to the KAE1 / TsaD family. Requires Fe(2+) as cofactor.

It is found in the cytoplasm. The enzyme catalyses L-threonylcarbamoyladenylate + adenosine(37) in tRNA = N(6)-L-threonylcarbamoyladenosine(37) in tRNA + AMP + H(+). In terms of biological role, required for the formation of a threonylcarbamoyl group on adenosine at position 37 (t(6)A37) in tRNAs that read codons beginning with adenine. Is involved in the transfer of the threonylcarbamoyl moiety of threonylcarbamoyl-AMP (TC-AMP) to the N6 group of A37, together with TsaE and TsaB. TsaD likely plays a direct catalytic role in this reaction. The sequence is that of tRNA N6-adenosine threonylcarbamoyltransferase from Cronobacter sakazakii (strain ATCC BAA-894) (Enterobacter sakazakii).